Consider the following 451-residue polypeptide: Phosphoglucosamine mutase (451 aa).

Ser107 serves as the catalytic Phosphoserine intermediate. Mg(2+)-binding residues include Ser107, Asp246, Asp248, and Asp250. At Ser107 the chain carries Phosphoserine.

This sequence belongs to the phosphohexose mutase family. It depends on Mg(2+) as a cofactor. In terms of processing, activated by phosphorylation.

It catalyses the reaction alpha-D-glucosamine 1-phosphate = D-glucosamine 6-phosphate. Functionally, catalyzes the conversion of glucosamine-6-phosphate to glucosamine-1-phosphate. In Burkholderia ambifaria (strain ATCC BAA-244 / DSM 16087 / CCUG 44356 / LMG 19182 / AMMD) (Burkholderia cepacia (strain AMMD)), this protein is Phosphoglucosamine mutase.